Here is a 431-residue protein sequence, read N- to C-terminus: MLDITYVRQNLAEIESMLQNRQLASEKPRLRQLLEYDKNRRELVQRSDEMKAQRNKVSKEIADIKRTGQGSGEELIRQMKEVSDEITMMDATLSKLASDIEEILLSLPNRLHESVPTGKCAEDNVICKAPVPYLHLLDFPIKNHLELGRSLGILDFERGAKISGAGFPVYIGKGARLERALINFMLDYHTDHHGFTEVFPPFFVNQESLRGTGQWPKFADQVYHIEEDNLYAIPTAEVPVTNLHRNEMIDAERLPVSYVAYSACFRREAGSYGKDTRGFLRVHQFNKVEMVKFTRPEESYQELEKILMSAEAILQALMIPYRVLLLCSGDISANATKCYDIEVWSPAEEKYLEASSCSNFEDYQARRMNIRFKADSRSKPEFVHTLNGSGLATSRLMVSLLEHYQNRDGSITIPEALRPYTGFTSIDQLTS.

Position 235–237 (235–237 (TAE)) interacts with L-serine. ATP is bound by residues 266-268 (RRE) and V282. E289 lines the L-serine pocket. 353 to 356 (EASS) lines the ATP pocket. An L-serine-binding site is contributed by S389.

The protein belongs to the class-II aminoacyl-tRNA synthetase family. Type-1 seryl-tRNA synthetase subfamily. In terms of assembly, homodimer. The tRNA molecule binds across the dimer.

It is found in the cytoplasm. The catalysed reaction is tRNA(Ser) + L-serine + ATP = L-seryl-tRNA(Ser) + AMP + diphosphate + H(+). The enzyme catalyses tRNA(Sec) + L-serine + ATP = L-seryl-tRNA(Sec) + AMP + diphosphate + H(+). The protein operates within aminoacyl-tRNA biosynthesis; selenocysteinyl-tRNA(Sec) biosynthesis; L-seryl-tRNA(Sec) from L-serine and tRNA(Sec): step 1/1. Catalyzes the attachment of serine to tRNA(Ser). Is also able to aminoacylate tRNA(Sec) with serine, to form the misacylated tRNA L-seryl-tRNA(Sec), which will be further converted into selenocysteinyl-tRNA(Sec). In Chlorobium phaeobacteroides (strain DSM 266 / SMG 266 / 2430), this protein is Serine--tRNA ligase.